The sequence spans 279 residues: Tryptophan synthase alpha chain (279 aa).

Active-site proton acceptor residues include Glu-50 and Asp-61.

This sequence belongs to the TrpA family. In terms of assembly, tetramer of two alpha and two beta chains.

It catalyses the reaction (1S,2R)-1-C-(indol-3-yl)glycerol 3-phosphate + L-serine = D-glyceraldehyde 3-phosphate + L-tryptophan + H2O. The protein operates within amino-acid biosynthesis; L-tryptophan biosynthesis; L-tryptophan from chorismate: step 5/5. Functionally, the alpha subunit is responsible for the aldol cleavage of indoleglycerol phosphate to indole and glyceraldehyde 3-phosphate. This chain is Tryptophan synthase alpha chain, found in Brucella ovis (strain ATCC 25840 / 63/290 / NCTC 10512).